Here is a 381-residue protein sequence, read N- to C-terminus: Spindlin interactor and repressor of chromatin-binding protein (381 aa).

K49 is covalently cross-linked (Glycyl lysine isopeptide (Lys-Gly) (interchain with G-Cter in SUMO2)). Phosphoserine is present on residues S122 and S149. A compositionally biased stretch (polar residues) spans P148–D158. The tract at residues P148–V170 is disordered. Residues K190 and K221 each participate in a glycyl lysine isopeptide (Lys-Gly) (interchain with G-Cter in SUMO2) cross-link. Disordered stretches follow at residues P203–S270, L285–T320, and A335–V381. The span at R219–A229 shows a compositional bias: basic and acidic residues. 2 positions are modified to phosphoserine: S249 and S252. A compositionally biased stretch (basic and acidic residues) spans T288–A299. Glycyl lysine isopeptide (Lys-Gly) (interchain with G-Cter in SUMO2) cross-links involve residues K291 and K295. Residues P304–P315 show a composition bias toward low complexity. Phosphoserine occurs at positions 310 and 313.

Interacts with SPIN1, SPIN2A, SPIN2B, SPIN3 and SPIN4. Interacts with TCF7L2 in a SPIN1-dependent manner. Interacts with PARP1; promoting PARP1 ADP-ribosyltransferase activity.

It localises to the nucleus. It is found in the chromosome. In terms of biological role, chromatin protein that stabilizes SPIN1 and enhances its association with histone H3 trimethylated at both 'Lys-4' and 'Lys-9' (H3K4me3K9me3). Positively regulates poly-ADP-ribosylation in response to DNA damage; acts by facilitating PARP1 ADP-ribosyltransferase activity. This is Spindlin interactor and repressor of chromatin-binding protein from Mus musculus (Mouse).